Here is a 405-residue protein sequence, read N- to C-terminus: L-cysteine:1D-myo-inositol 2-amino-2-deoxy-alpha-D-glucopyranoside ligase (405 aa).

Cysteine 43 lines the Zn(2+) pocket. L-cysteinyl-5'-AMP is bound by residues 43–46 (CGIT), threonine 58, and 81–83 (NIT). The short motif at 45–55 (ITPYDATHLGH) is the 'HIGH' region element. The 'ERGGDP' region motif lies at 187 to 192 (ERGGDP). Tryptophan 227 contacts L-cysteinyl-5'-AMP. Residue cysteine 231 participates in Zn(2+) binding. Position 249-251 (249-251 (GSD)) interacts with L-cysteinyl-5'-AMP. Residue histidine 256 coordinates Zn(2+). Isoleucine 283 contributes to the L-cysteinyl-5'-AMP binding site. Residues 289-293 (KMSKS) carry the 'KMSKS' region motif.

Belongs to the class-I aminoacyl-tRNA synthetase family. MshC subfamily. As to quaternary structure, monomer. The cofactor is Zn(2+).

It catalyses the reaction 1D-myo-inositol 2-amino-2-deoxy-alpha-D-glucopyranoside + L-cysteine + ATP = 1D-myo-inositol 2-(L-cysteinylamino)-2-deoxy-alpha-D-glucopyranoside + AMP + diphosphate + H(+). Its function is as follows. Catalyzes the ATP-dependent condensation of GlcN-Ins and L-cysteine to form L-Cys-GlcN-Ins. The chain is L-cysteine:1D-myo-inositol 2-amino-2-deoxy-alpha-D-glucopyranoside ligase from Nakamurella multipartita (strain ATCC 700099 / DSM 44233 / CIP 104796 / JCM 9543 / NBRC 105858 / Y-104) (Microsphaera multipartita).